A 331-amino-acid chain; its full sequence is ATP-dependent 6-phosphofructokinase (331 aa).

Glycine 12 provides a ligand contact to ATP. ADP-binding positions include arginine 22–arginine 26 and arginine 55–aspartate 60. Residues arginine 73–phenylalanine 74 and glycine 103–serine 106 contribute to the ATP site. Aspartate 104 is a Mg(2+) binding site. Residue threonine 127–aspartate 129 coordinates substrate. Aspartate 129 (proton acceptor) is an active-site residue. An ADP-binding site is contributed by arginine 156. Substrate is bound by residues arginine 164 and methionine 171–arginine 173. ADP-binding positions include glycine 187–glutamate 189, lysine 213, and lysine 215–histidine 217. Substrate contacts are provided by residues glutamate 224, arginine 245, and histidine 251–arginine 254.

This sequence belongs to the phosphofructokinase type A (PFKA) family. ATP-dependent PFK group I subfamily. Prokaryotic clade 'B1' sub-subfamily. In terms of assembly, homotetramer. Mg(2+) serves as cofactor.

It localises to the cytoplasm. It catalyses the reaction beta-D-fructose 6-phosphate + ATP = beta-D-fructose 1,6-bisphosphate + ADP + H(+). Its pathway is carbohydrate degradation; glycolysis; D-glyceraldehyde 3-phosphate and glycerone phosphate from D-glucose: step 3/4. Its activity is regulated as follows. Allosterically activated by ADP and other diphosphonucleosides, and allosterically inhibited by phosphoenolpyruvate. Functionally, catalyzes the phosphorylation of D-fructose 6-phosphate to fructose 1,6-bisphosphate by ATP, the first committing step of glycolysis. The sequence is that of ATP-dependent 6-phosphofructokinase from Yersinia enterocolitica serotype O:8 / biotype 1B (strain NCTC 13174 / 8081).